We begin with the raw amino-acid sequence, 171 residues long: MTKKVAIILANEFEDIEYSSPKEALENAGFNTVVIGDTANSEVVGKHGEKVTVDVGIAEAKPEDYDALLIPGGFSPDHLRGDTEGRYGTFAKYFTKNDVPTFAICHGPQILIDTDDLKGRTLTAVLNVRKDLSNAGAHVVDESVVVDNNIVTSRVPDDLDDFNREIVKQLQ.

One can recognise a PfpI endopeptidase domain in the interval 3 to 171 (KKVAIILANE…FNREIVKQLQ (169 aa)).

The protein belongs to the peptidase C56 family.

This is an uncharacterized protein from Staphylococcus aureus (strain COL).